The sequence spans 271 residues: Putative phosphoenolpyruvate synthase regulatory protein (271 aa).

151-158 provides a ligand contact to ADP; sequence GVSRSGKT.

This sequence belongs to the pyruvate, phosphate/water dikinase regulatory protein family. PSRP subfamily.

The enzyme catalyses [pyruvate, water dikinase] + ADP = [pyruvate, water dikinase]-phosphate + AMP + H(+). It carries out the reaction [pyruvate, water dikinase]-phosphate + phosphate + H(+) = [pyruvate, water dikinase] + diphosphate. In terms of biological role, bifunctional serine/threonine kinase and phosphorylase involved in the regulation of the phosphoenolpyruvate synthase (PEPS) by catalyzing its phosphorylation/dephosphorylation. The chain is Putative phosphoenolpyruvate synthase regulatory protein from Paraburkholderia phytofirmans (strain DSM 17436 / LMG 22146 / PsJN) (Burkholderia phytofirmans).